A 161-amino-acid chain; its full sequence is Putative pre-16S rRNA nuclease (161 aa).

The protein belongs to the YqgF nuclease family.

It localises to the cytoplasm. Functionally, could be a nuclease involved in processing of the 5'-end of pre-16S rRNA. The polypeptide is Putative pre-16S rRNA nuclease (Bradyrhizobium diazoefficiens (strain JCM 10833 / BCRC 13528 / IAM 13628 / NBRC 14792 / USDA 110)).